Here is a 150-residue protein sequence, read N- to C-terminus: Dynein light chain Tctex-type protein 2B (150 aa).

This sequence belongs to the dynein light chain Tctex-type family.

Its subcellular location is the dynein axonemal particle. Its function is as follows. Acts as one of several non-catalytic accessory components of the cytoplasmic dynein 2 complex (dynein-2 complex), a motor protein complex that drives the movement of cargos along microtubules within cilia and flagella in concert with the intraflagellar transport (IFT) system. Required for proper retrograde ciliary transport. The polypeptide is Dynein light chain Tctex-type protein 2B (dynlt2b) (Danio rerio (Zebrafish)).